Consider the following 239-residue polypeptide: Peptidyl-tRNA hydrolase (239 aa).

Tyr14 lines the tRNA pocket. The Proton acceptor role is filled by His19. The tRNA site is built by Phe64, Asn66, and Asn112. Residues 188-225 form a disordered region; that stretch reads GGKPDAEEPQAPKKQVGQSHIHKARNAAQPKKLPATGP.

It belongs to the PTH family. In terms of assembly, monomer.

The protein resides in the cytoplasm. It carries out the reaction an N-acyl-L-alpha-aminoacyl-tRNA + H2O = an N-acyl-L-amino acid + a tRNA + H(+). Hydrolyzes ribosome-free peptidyl-tRNAs (with 1 or more amino acids incorporated), which drop off the ribosome during protein synthesis, or as a result of ribosome stalling. In terms of biological role, catalyzes the release of premature peptidyl moieties from peptidyl-tRNA molecules trapped in stalled 50S ribosomal subunits, and thus maintains levels of free tRNAs and 50S ribosomes. This is Peptidyl-tRNA hydrolase from Sinorhizobium fredii (strain NBRC 101917 / NGR234).